Consider the following 137-residue polypeptide: Large ribosomal subunit protein uL16c (137 aa).

It belongs to the universal ribosomal protein uL16 family. In terms of assembly, part of the 50S ribosomal subunit.

The protein localises to the plastid. It is found in the chloroplast. In Rhodomonas salina (Cryptomonas salina), this protein is Large ribosomal subunit protein uL16c.